A 120-amino-acid chain; its full sequence is Ribonuclease P protein component (120 aa).

Belongs to the RnpA family. In terms of assembly, consists of a catalytic RNA component (M1 or rnpB) and a protein subunit.

It carries out the reaction Endonucleolytic cleavage of RNA, removing 5'-extranucleotides from tRNA precursor.. Its function is as follows. RNaseP catalyzes the removal of the 5'-leader sequence from pre-tRNA to produce the mature 5'-terminus. It can also cleave other RNA substrates such as 4.5S RNA. The protein component plays an auxiliary but essential role in vivo by binding to the 5'-leader sequence and broadening the substrate specificity of the ribozyme. The polypeptide is Ribonuclease P protein component (Thioalkalivibrio sulfidiphilus (strain HL-EbGR7)).